The chain runs to 511 residues: Glucans biosynthesis protein G (511 aa).

The N-terminal stretch at 1–22 (MMKMRWLSAAVMLTLYTSSSWA) is a signal peptide.

This sequence belongs to the OpgD/OpgG family.

The protein localises to the periplasm. Its pathway is glycan metabolism; osmoregulated periplasmic glucan (OPG) biosynthesis. Its function is as follows. Involved in the biosynthesis of osmoregulated periplasmic glucans (OPGs). The sequence is that of Glucans biosynthesis protein G from Shigella boydii serotype 4 (strain Sb227).